The chain runs to 248 residues: Opiorphin prepropeptide (248 aa).

The first 21 residues, 1 to 21 (MKLTFFLGLLALISCFTPSES), serve as a signal peptide directing secretion. Gln-22 bears the Pyrrolidone carboxylic acid mark. Residues 150 to 198 (DTTITTNPPTTATATTSTSTKPTMTISSSTVPISSTPEPATSISAATPA) form a disordered region. Asn-218 carries an N-linked (GlcNAc...) asparagine glycan.

It belongs to the PROL1/PROL3 family. As to expression, abundantly expressed in lacrimal gland where it found in the secretory endpieces. Also expressed at modest levels in the submandibular gland.

The protein localises to the secreted. Opiorphin is an endogenous inhibitor of neprilysin and aminopeptidase N. Inhibits the breakdown of substance P, Mca-BK2 and Met-enkephalin by neprilysin in vitro with IC(50) values of 29 uM, 33 uM and 33 uM respectively. Inhibits the breakdown of Ala-pNA by aminopeptidase N in vitro with an IC(50) of 65 uM. Has a potent analgesic effect when administered to rats by intravenous injection. The chain is Opiorphin prepropeptide from Homo sapiens (Human).